The chain runs to 483 residues: Lipoamide acyltransferase component of branched-chain alpha-keto acid dehydrogenase complex, mitochondrial (483 aa).

The transit peptide at 1–75 (MIARRIWRSH…AMATDSNSGL (75 aa)) directs the protein to the mitochondrion. The 75-residue stretch at 76–150 (IDVPLAQTGE…KVGETLVRLA (75 aa)) folds into the Lipoyl-binding domain. K116 bears the N6-lipoyllysine mark. A Peripheral subunit-binding (PSBD) domain is found at 183-220 (LSTPAVRNLAKDLGIDINVITGTGKDGRVLKEDVLRFS). Catalysis depends on residues H453 and D457.

The protein belongs to the 2-oxoacid dehydrogenase family. Forms a 24-polypeptide structural core with octahedral symmetry. It depends on (R)-lipoate as a cofactor. In terms of tissue distribution, expressed in the non-photosynthetic organs such as siliques, flowers and roots.

It localises to the mitochondrion matrix. It catalyses the reaction N(6)-[(R)-dihydrolipoyl]-L-lysyl-[protein] + 2-methylpropanoyl-CoA = N(6)-[(R)-S(8)-2-methylpropanoyldihydrolipoyl]-L-lysyl-[protein] + CoA. In terms of biological role, the branched-chain alpha-keto dehydrogenase complex catalyzes the overall conversion of alpha-keto acids to acyl-CoA and CO(2). It contains multiple copies of three enzymatic components: branched-chain alpha-keto acid decarboxylase (E1), lipoamide acyltransferase (E2) and lipoamide dehydrogenase (E3). Within this complex, the catalytic function of this enzyme is to accept, and to transfer to coenzyme A, acyl groups that are generated by the branched-chain alpha-keto acid decarboxylase component. Required during sugar starvation and acts under the control of a sugar-sensing mechanism involving Ser/Thr kinases and phosphatases. This chain is Lipoamide acyltransferase component of branched-chain alpha-keto acid dehydrogenase complex, mitochondrial (BCE2), found in Arabidopsis thaliana (Mouse-ear cress).